We begin with the raw amino-acid sequence, 178 residues long: DELTA-miturgitoxin-Cp3a (178 aa).

The N-terminal stretch at 1–18 (MKALYLLGLLAFLYSCSS) is a signal peptide. Residues 19 to 46 (ENVYDLQPESSEEENPGTFLEAIQEQSR) constitute a propeptide that is removed on maturation. Positions 43–46 (EQSR) match the Processing quadruplet motif motif. 8 disulfide bridges follow: Cys-48/Cys-63, Cys-55/Cys-72, Cys-62/Cys-86, Cys-74/Cys-84, Cys-113/Cys-128, Cys-120/Cys-137, Cys-127/Cys-155, and Cys-139/Cys-153.

This sequence belongs to the spider toxin CSTX family. Double-CSTX subfamily. Cleavage of the propeptide depends on the processing quadruplet motif (XXXR, with at least one of X being E). Expressed by the venom gland.

The protein resides in the secreted. Its function is as follows. Spider venom toxin that exhibits cytolytic activity by forming an alpha-helix across the membrane. Lethal to insect larvae. This is DELTA-miturgitoxin-Cp3a from Cheiracanthium punctorium (Yellow sac spider).